The sequence spans 462 residues: uncharacterized protein (462 aa).

Residues 1–108 form a disordered region; sequence MEDSNTNKDI…NGQDDQDEMD (108 aa). The span at 36-51 shows a compositional bias: basic and acidic residues; it reads TVERILERKQKERESK. The span at 64 to 95 shows a compositional bias: low complexity; sequence SSPSSLLSSPISSNDNNNNNNNNNNESFDINN. The stretch at 119 to 150 forms a coiled coil; it reads LLKRKAALAAKKKESLAEQMKKYNQQYDSIIS. The interval 188–208 is disordered; sequence SKLQSLNNNTSPSTSSSNLID. Low complexity predominate over residues 190–208; it reads LQSLNNNTSPSTSSSNLID.

This is an uncharacterized protein from Dictyostelium discoideum (Social amoeba).